The primary structure comprises 177 residues: Nucleoside triphosphate/diphosphate phosphatase (177 aa).

Arg23 functions as the Proton donor in the catalytic mechanism. Positions 87, 103, 105, 107, 120, and 123 each coordinate Mg(2+).

It belongs to the Ntdp family. Requires Mg(2+) as cofactor.

It carries out the reaction a ribonucleoside 5'-triphosphate + H2O = a ribonucleoside 5'-diphosphate + phosphate + H(+). It catalyses the reaction a ribonucleoside 5'-diphosphate + H2O = a ribonucleoside 5'-phosphate + phosphate + H(+). In terms of biological role, has nucleoside phosphatase activity towards nucleoside triphosphates and nucleoside diphosphates. The protein is Nucleoside triphosphate/diphosphate phosphatase of Streptococcus suis (strain 98HAH33).